Here is a 753-residue protein sequence, read N- to C-terminus: Metal regulatory transcription factor 1 (753 aa).

Residue Gly-2 is modified to N-acetylglycine. At Ser-5 the chain carries Phosphoserine. Positions 133–138 match the Nuclear localization signal motif; the sequence is KRKEVK. 6 consecutive C2H2-type zinc fingers follow at residues 140–164, 170–194, 200–224, 229–253, 259–283, and 289–313; these read YQCT…QKTH, FVCN…VRVH, FECD…QRLH, FNCE…IRTH, FRCD…VRTH, and FFCP…MKGH. At Ser-305 the chain carries Phosphoserine. 3 disordered regions span residues 308–328, 395–466, and 648–715; these read SHMK…QHNG, ESFN…ALLQ, and SRRK…LSAM. Polar residues predominate over residues 408-417; that stretch reads PPSTGNSASL. Residues 655 to 666 show a composition bias toward pro residues; it reads SPPPPEPSPQAP. Positions 679–698 are enriched in low complexity; it reads SSAPVPGSSSSTLPSSCEQS. Residues 700–712 are compositionally biased toward polar residues; that stretch reads QAETPSDPQTETL.

The protein localises to the nucleus. It localises to the cytoplasm. Functionally, zinc-dependent transcriptional regulator of cellular adaption to conditions of exposure to heavy metals. Binds to metal responsive elements (MRE) in promoters and activates the transcription of metallothionein genes like metallothionein-2/MT2A. Also regulates the expression of metalloproteases in response to intracellular zinc and functions as a catabolic regulator of cartilages. This Homo sapiens (Human) protein is Metal regulatory transcription factor 1 (MTF1).